Reading from the N-terminus, the 817-residue chain is Ribonuclease R 1 (817 aa).

The region spanning 259-584 is the RNB domain; sequence RVDYRNEITF…DLLVHRLIRE (326 aa). One can recognise an S1 motif domain in the interval 637 to 717; it reads GEEYEGIIAS…MTGEIDFEYL (81 aa). The segment at 728–817 is disordered; sequence AKAKKKPDHK…DGRKKPHKRG (90 aa). The segment covering 729 to 742 has biased composition (basic residues); it reads KAKKKPDHKGRKKS. Basic and acidic residues-rich tracts occupy residues 767 to 777 and 795 to 810; these read RRADEKFEFDK and KFTDKKDNGKKFTDGR.

The protein belongs to the RNR ribonuclease family. RNase R subfamily.

The protein resides in the cytoplasm. It carries out the reaction Exonucleolytic cleavage in the 3'- to 5'-direction to yield nucleoside 5'-phosphates.. In terms of biological role, 3'-5' exoribonuclease that releases 5'-nucleoside monophosphates and is involved in maturation of structured RNAs. The polypeptide is Ribonuclease R 1 (rnr1) (Lactococcus lactis subsp. lactis (strain IL1403) (Streptococcus lactis)).